A 67-amino-acid polypeptide reads, in one-letter code: Medusin-H1 (67 aa).

Residues 1–22 form the signal peptide; it reads MDFLKKSLFLVLFLGFFSLSIC. The propeptide occupies 23–48; the sequence is EEEKRETEEKENEQEDDREERREEKR. The tract at residues 24–46 is disordered; the sequence is EEKRETEEKENEQEDDREERREE. Residues 31 to 40 are compositionally biased toward acidic residues; it reads EKENEQEDDR. Leu66 carries the post-translational modification Leucine amide.

It belongs to the frog skin active peptide (FSAP) family. Medusin subfamily. Expressed by the skin glands.

Its subcellular location is the secreted. Antimicrobial peptide with activity against Gram-positive bacteria (S.aureus, MIC=32 mg/L) and fungi (C.albicans, MIC=128 mg/L). Shows weak hemolytic activity. The polypeptide is Medusin-H1 (Pithecopus hypochondrialis (Orange-legged leaf frog)).